The following is a 621-amino-acid chain: UvrABC system protein C (621 aa).

A GIY-YIG domain is found at 13 to 92; that stretch reads NEPGVYLMKN…IKKYSPKYNI (80 aa). The UVR domain occupies 204–239; that stretch reads RSLLNKLKEEMQSASGNLEFEKAASLRDKMIAIENI.

Belongs to the UvrC family. Interacts with UvrB in an incision complex.

It is found in the cytoplasm. Its function is as follows. The UvrABC repair system catalyzes the recognition and processing of DNA lesions. UvrC both incises the 5' and 3' sides of the lesion. The N-terminal half is responsible for the 3' incision and the C-terminal half is responsible for the 5' incision. The sequence is that of UvrABC system protein C from Clostridium beijerinckii (strain ATCC 51743 / NCIMB 8052) (Clostridium acetobutylicum).